Here is a 598-residue protein sequence, read N- to C-terminus: Movement protein Hsp70h (598 aa).

It belongs to the heat shock protein 70 family. As to quaternary structure, homomultimer. Interacts with p20. This interaction allows the docking of the latter to the virion.

Its subcellular location is the virion. It localises to the host cell junction. It is found in the host plasmodesma. Transports viral genome to neighboring plant cells directly through plasmosdesmata, without any budding. The movement protein allows efficient cell to cell propagation, by bypassing the host cell wall barrier. Two movement proteins, p6, Hsp70h and three structural proteins, CP, CPm, and P64 are essential for cell-cell movement. Also plays a role in virion formation. Together with CPm and p64, encapsidates the 5'-terminal portion of the viral genome. This chain is Movement protein Hsp70h, found in Beta vulgaris (Sugar beet).